Consider the following 104-residue polypeptide: Large ribosomal subunit protein uL24 (104 aa).

Belongs to the universal ribosomal protein uL24 family. Part of the 50S ribosomal subunit.

One of two assembly initiator proteins, it binds directly to the 5'-end of the 23S rRNA, where it nucleates assembly of the 50S subunit. In terms of biological role, one of the proteins that surrounds the polypeptide exit tunnel on the outside of the subunit. The sequence is that of Large ribosomal subunit protein uL24 from Chromobacterium violaceum (strain ATCC 12472 / DSM 30191 / JCM 1249 / CCUG 213 / NBRC 12614 / NCIMB 9131 / NCTC 9757 / MK).